Here is a 496-residue protein sequence, read N- to C-terminus: Glutamyl-tRNA(Gln) amidotransferase subunit A (496 aa).

Residues K79 and S159 each act as charge relay system in the active site. Catalysis depends on S183, which acts as the Acyl-ester intermediate.

The protein belongs to the amidase family. GatA subfamily. As to quaternary structure, heterotrimer of A, B and C subunits.

The catalysed reaction is L-glutamyl-tRNA(Gln) + L-glutamine + ATP + H2O = L-glutaminyl-tRNA(Gln) + L-glutamate + ADP + phosphate + H(+). In terms of biological role, allows the formation of correctly charged Gln-tRNA(Gln) through the transamidation of misacylated Glu-tRNA(Gln) in organisms which lack glutaminyl-tRNA synthetase. The reaction takes place in the presence of glutamine and ATP through an activated gamma-phospho-Glu-tRNA(Gln). This chain is Glutamyl-tRNA(Gln) amidotransferase subunit A, found in Bartonella quintana (strain Toulouse) (Rochalimaea quintana).